Consider the following 62-residue polypeptide: DNA-directed RNA polymerase subunit Rpo10 (62 aa).

Residues cysteine 6, cysteine 9, cysteine 43, and cysteine 44 each coordinate Zn(2+).

Belongs to the archaeal Rpo10/eukaryotic RPB10 RNA polymerase subunit family. Part of the RNA polymerase complex. Zn(2+) serves as cofactor.

The protein resides in the cytoplasm. The catalysed reaction is RNA(n) + a ribonucleoside 5'-triphosphate = RNA(n+1) + diphosphate. Functionally, DNA-dependent RNA polymerase (RNAP) catalyzes the transcription of DNA into RNA using the four ribonucleoside triphosphates as substrates. This chain is DNA-directed RNA polymerase subunit Rpo10, found in Methanosarcina acetivorans (strain ATCC 35395 / DSM 2834 / JCM 12185 / C2A).